The following is a 517-amino-acid chain: Gallate 1-beta-glucosyltransferase 84A24 (517 aa).

The active-site Proton acceptor is H19. Residue H19 coordinates an anthocyanidin. The UDP-alpha-D-glucose site is built by Q344, H359, W362, N363, S364, and E367. G382 contacts an anthocyanidin. Residues D383 and Q384 each contribute to the UDP-alpha-D-glucose site.

The protein belongs to the UDP-glycosyltransferase family. In terms of tissue distribution, highly expressed in leaf. Also expressed in peel, stem, root and aril.

The protein resides in the cytoplasm. It catalyses the reaction 3,4,5-trihydroxybenzoate + UDP-alpha-D-glucose = 1-O-galloyl-beta-D-glucose + UDP. The enzyme catalyses 3,4-dihydroxybenzoate + UDP-alpha-D-glucose = 1-O-(3,4-dihydroxy-benzoyl)-beta-D-glucose + UDP. The catalysed reaction is 4-hydroxybenzoate + UDP-alpha-D-glucose = 4-(beta-D-glucosyloxy)benzoate + UDP + H(+). It carries out the reaction (E)-cinnamate + UDP-alpha-D-glucose = 1-O-(trans-cinnamoyl)-beta-D-glucose + UDP. It catalyses the reaction (E)-sinapate + UDP-alpha-D-glucose = 1-O-(trans-sinapoyl)-beta-D-glucose + UDP. The enzyme catalyses (E)-4-coumarate + UDP-alpha-D-glucose = 1-O-(trans-4-coumaroyl)-beta-D-glucose + UDP. The catalysed reaction is (E)-caffeate + UDP-alpha-D-glucose = 1-O-[(E)-caffeoyl]-beta-D-glucose + UDP. It carries out the reaction (E)-ferulate + UDP-alpha-D-glucose = 1-O-[(E)-feruloyl]-beta-D-glucose + UDP. It catalyses the reaction genistein + UDP-alpha-D-glucose = genistein 7-O-beta-D-glucoside + UDP + H(+). The enzyme catalyses apigenin + UDP-alpha-D-glucose = apigenin 7-O-beta-D-glucoside + UDP + H(+). The catalysed reaction is luteolin + UDP-alpha-D-glucose = luteolin 7-O-beta-D-glucoside + UDP + H(+). Functionally, glucosyltransferase that catalyzes the formation of 1-O-beta-D-glucose esters with hydroxybenzoic acids and cinnamic acid including its derivatives as preferred glucosyl acceptors. Has significant activity with gallic acid (3,4,5-trihydroxybenzoic acid), 3,4-dihydroxybenzoic acid, 4-hydroxybenzoic acid, cinnamic acid, sinapic acid, coumaric acid, caffeic acid and ferulic acid in vitro. Gallic acid is the predicted native substrate of the enzyme, which thus catalyzes the formation of 1-O-galloyl-beta-D-glucose, the first committed step of hydrolyzable tannins (HTs) biosynthesis, with punicalagin isomers being the major HTs of pomegranate. Catalyzes the formation of flavonoid glucosides with genistein, apigenin and luteolin in vitro. Has low activity with benzoic acid, 2-hydroxybenzoic acid, 3-hydroxybenzoic acid, 2,4-dihydroxybenzoic acid, naringenin and quercetin. No activity with catechol, resveratrol, chlorogenic acid, catechin and epicatechin (building blocks of proanthocyanidins) or cyanidin, delphinidin and pelargonidin (the three anthocyanidins). The polypeptide is Gallate 1-beta-glucosyltransferase 84A24 (Punica granatum (Pomegranate)).